The following is a 72-amino-acid chain: Large ribosomal subunit protein uL29 (72 aa).

The protein belongs to the universal ribosomal protein uL29 family.

The polypeptide is Large ribosomal subunit protein uL29 (Caldicellulosiruptor saccharolyticus (strain ATCC 43494 / DSM 8903 / Tp8T 6331)).